The following is a 315-amino-acid chain: Homoserine kinase (315 aa).

97–107 is a binding site for ATP; it reads PPARGLGSSAT.

Belongs to the GHMP kinase family. Homoserine kinase subfamily.

The protein localises to the cytoplasm. The enzyme catalyses L-homoserine + ATP = O-phospho-L-homoserine + ADP + H(+). The protein operates within amino-acid biosynthesis; L-threonine biosynthesis; L-threonine from L-aspartate: step 4/5. Functionally, catalyzes the ATP-dependent phosphorylation of L-homoserine to L-homoserine phosphate. The protein is Homoserine kinase of Synechococcus sp. (strain WH7803).